The chain runs to 245 residues: Pyridoxine 5'-phosphate synthase (245 aa).

Asparagine 7 lines the 3-amino-2-oxopropyl phosphate pocket. 9–10 is a 1-deoxy-D-xylulose 5-phosphate binding site; the sequence is DH. Residue arginine 18 coordinates 3-amino-2-oxopropyl phosphate. Histidine 43 functions as the Proton acceptor in the catalytic mechanism. Residues arginine 45 and histidine 50 each contribute to the 1-deoxy-D-xylulose 5-phosphate site. The Proton acceptor role is filled by glutamate 70. Threonine 100 is a binding site for 1-deoxy-D-xylulose 5-phosphate. Histidine 190 acts as the Proton donor in catalysis. Residues glycine 191 and 212-213 each bind 3-amino-2-oxopropyl phosphate; that span reads GH.

The protein belongs to the PNP synthase family. As to quaternary structure, homooctamer; tetramer of dimers.

It is found in the cytoplasm. The enzyme catalyses 3-amino-2-oxopropyl phosphate + 1-deoxy-D-xylulose 5-phosphate = pyridoxine 5'-phosphate + phosphate + 2 H2O + H(+). It functions in the pathway cofactor biosynthesis; pyridoxine 5'-phosphate biosynthesis; pyridoxine 5'-phosphate from D-erythrose 4-phosphate: step 5/5. Functionally, catalyzes the complicated ring closure reaction between the two acyclic compounds 1-deoxy-D-xylulose-5-phosphate (DXP) and 3-amino-2-oxopropyl phosphate (1-amino-acetone-3-phosphate or AAP) to form pyridoxine 5'-phosphate (PNP) and inorganic phosphate. The chain is Pyridoxine 5'-phosphate synthase from Prochlorococcus marinus (strain NATL1A).